A 358-amino-acid chain; its full sequence is Type II restriction enzyme SacI (358 aa).

The catalysed reaction is Endonucleolytic cleavage of DNA to give specific double-stranded fragments with terminal 5'-phosphates.. Its function is as follows. A subtype P restriction enzyme that recognizes the double-stranded sequence 5'-GAGCTC-3' and cleaves after T-5. This chain is Type II restriction enzyme SacI, found in Streptomyces achromogenes.